The chain runs to 638 residues: MKGGCVSQWKAAAGLLFCVTVFASAERPVFTNHFLVELHKGGEEEARQVAAEHGFGVRKLPFAEGLYHFYHNGLAKAKRRRSLHHKQRLERDPRVKRALQQEGFDRKKRGYRDINEIDINMNDPLFTKQWYLINTGQADGTPGLDLNVAEAWELGYTGKGVTIGIMDDGIDYLHPDLASNYNAEASYDFSSNDPYPYPRYTDDWFNSHGTRCAGEVSAAANNNICGVGVAYSSKVAGIRMLDQPFMTDIIEASSISHMPQLIDIYSASWGPTDNGKTVDGPRELTLQAMADGVNKGRGGKGSIYVWASGDGGSYDDCNCDGYASSMWTISINSAINDGRTALYDESCSSTLASTFSNGRKRNPEAGVATTDLYGNCTLRHSGTSAAAPEAAGVFALALEANLGLTWRDMQHLTVLTSKRNQLHDEVHQWRRNGVGLEFNHLFGYGVLDAGAMVKMAKDWKTVPERFHCVGGSVQDPEKIPSTGKLVLTLTTDACEGKENFVRYLEHVQAVITVNATRRGDLNINMTSPMGTKSILLSRRPRDDDSKVGFDKWPFMTTHTWGEDARGTWTLELGFVGSAPQKGAVKEWTLMLHGSQSAPYIDQVVRDYQSKLAMSKKEELEEELDEAVERSLKSILGKH.

A signal peptide spans 1–25 (MKGGCVSQWKAAAGLLFCVTVFASA). A propeptide spanning residues 26–109 (ERPVFTNHFL…QQEGFDRKKR (84 aa)) is cleaved from the precursor. One can recognise a Peptidase S8 domain in the interval 129 to 453 (QWYLINTGQA…YGVLDAGAMV (325 aa)). Active-site charge relay system residues include aspartate 167 and histidine 208. 2 cysteine pairs are disulfide-bonded: cysteine 225-cysteine 376 and cysteine 317-cysteine 347. A glycan (N-linked (GlcNAc...) asparagine) is linked at asparagine 375. Serine 384 functions as the Charge relay system in the catalytic mechanism. In terms of domain architecture, P/Homo B spans 461 to 597 (TVPERFHCVG…TLMLHGSQSA (137 aa)). The cysteines at positions 468 and 494 are disulfide-linked. Residues asparagine 514 and asparagine 524 are each glycosylated (N-linked (GlcNAc...) asparagine).

Belongs to the peptidase S8 family. Furin subfamily.

It localises to the cytoplasmic vesicle. The protein localises to the secretory vesicle. It is found in the secreted. It carries out the reaction Release of protein hormones and neuropeptides from their precursors, generally by hydrolysis of -Lys-Arg-|- bonds.. Functionally, serine endopeptidase which is involved in the processing of hormone and other protein precursors at sites comprised of pairs of basic amino acid residues. Responsible for the release of glucagon from proglucagon in pancreatic A cells. In Sus scrofa (Pig), this protein is Neuroendocrine convertase 2 (PCSK2).